A 254-amino-acid chain; its full sequence is 5'-nucleotidase SurE (254 aa).

A divalent metal cation contacts are provided by D8, D9, S38, and N91.

This sequence belongs to the SurE nucleotidase family. It depends on a divalent metal cation as a cofactor.

Its subcellular location is the cytoplasm. The enzyme catalyses a ribonucleoside 5'-phosphate + H2O = a ribonucleoside + phosphate. Its function is as follows. Nucleotidase that shows phosphatase activity on nucleoside 5'-monophosphates. In Anaeromyxobacter dehalogenans (strain 2CP-C), this protein is 5'-nucleotidase SurE.